Reading from the N-terminus, the 679-residue chain is Biosynthetic arginine decarboxylase (679 aa).

The interval 1–43 (MKHRGQEEMGVESTATSDEVVKVPANGNKLEGKNHKQKKLLPT) is disordered. Lys149 carries the post-translational modification N6-(pyridoxal phosphate)lysine. A substrate-binding site is contributed by 331–341 (LDVGGGLGVDY).

This sequence belongs to the Orn/Lys/Arg decarboxylase class-II family. SpeA subfamily. The cofactor is Mg(2+). Requires pyridoxal 5'-phosphate as cofactor.

The enzyme catalyses L-arginine + H(+) = agmatine + CO2. Its function is as follows. Catalyzes the biosynthesis of agmatine from arginine. This is Biosynthetic arginine decarboxylase from Nostoc sp. (strain PCC 7120 / SAG 25.82 / UTEX 2576).